Reading from the N-terminus, the 323-residue chain is Sphingolipid delta(4)-desaturase DES1 (323 aa).

Gly2 is lipidated: N-myristoyl glycine. 2 consecutive transmembrane segments (helical) span residues 41-61 (SNLIWIVIMMVLTQFVAFYLV) and 68-88 (WVLFWAYAFGSCVNHSMTLAI). The Histidine box-1 motif lies at 89-93 (HEVSH). Residues 102–122 (AMWNRWFGIFANLPIGVPYSV) traverse the membrane as a helical segment. Residues 128 to 132 (HMDHH) carry the Histidine box-2 motif. 3 consecutive transmembrane segments (helical) span residues 152-172 (FFCTTFRKFIWVILQPLFYAF), 184-204 (YLEIINTVIQITFDIVVYYVL), and 209-229 (LVYMLAASLFGLGLHPISGHF). The Histidine box-3 signature appears at 259-263 (HNEHH). A Phosphoserine modification is found at Ser307.

The protein belongs to the fatty acid desaturase type 1 family. DEGS subfamily. In terms of assembly, interacts with RLBP1; the interaction increases synthesis of chromophore-precursors by DEGS1. In terms of processing, myristoylation can target the enzyme to the mitochondria leading to an increase in ceramide levels.

Its subcellular location is the mitochondrion membrane. It localises to the endoplasmic reticulum membrane. It carries out the reaction an N-acylsphinganine + 2 Fe(II)-[cytochrome b5] + O2 + 2 H(+) = an N-acylsphing-4-enine + 2 Fe(III)-[cytochrome b5] + 2 H2O. The catalysed reaction is all-trans-retinol = 11-cis-retinol. The enzyme catalyses all-trans-retinol = 9-cis-retinol. It catalyses the reaction all-trans-retinol = 13-cis-retinol. It carries out the reaction 11-cis-retinol = 13-cis-retinol. The catalysed reaction is 11-cis-retinol = 9-cis-retinol. Has sphingolipid-delta-4-desaturase activity. Converts D-erythro-sphinganine to D-erythro-sphingosine (E-sphing-4-enine). Catalyzes the equilibrium isomerization of retinols. This Bos taurus (Bovine) protein is Sphingolipid delta(4)-desaturase DES1 (DEGS1).